The following is a 99-amino-acid chain: Small integral membrane protein 14 (99 aa).

The Lumenal portion of the chain corresponds to 1–49 (MAEGGFDPCECVCSHEHAMRRLINLLRQSQSYCTDTECLQELPGPSGDN). Residues 50–70 (GISVTMILVAWMVIALILFLL) traverse the membrane as a helical segment. Residues 71–99 (RPPNLRGSSLPGKPTSPHNGQDPPAPPVD) are Cytoplasmic-facing. A disordered region spans residues 78–99 (SSLPGKPTSPHNGQDPPAPPVD).

The protein localises to the endoplasmic reticulum membrane. This Homo sapiens (Human) protein is Small integral membrane protein 14 (SMIM14).